The following is a 472-amino-acid chain: Poly(A) polymerase catalytic subunit (472 aa).

Active-site residues include Asp-191 and Asp-193.

It belongs to the poxviridae poly(A) polymerase catalytic subunit family. Heterodimer of a large (catalytic) subunit and a small (regulatory) subunit.

The catalysed reaction is RNA(n) + ATP = RNA(n)-3'-adenine ribonucleotide + diphosphate. Its function is as follows. Polymerase that creates the 3'-poly(A) tail of mRNA's. This is Poly(A) polymerase catalytic subunit (PAPL) from Capra hircus (Goat).